A 569-amino-acid chain; its full sequence is Urease subunit alpha (569 aa).

The region spanning 131–569 is the Urease domain; that stretch reads GGIDTHIHFI…LPLAQRYLLL (439 aa). Positions 136, 138, and 219 each coordinate Ni(2+). Position 219 is an N6-carboxylysine (lysine 219). Histidine 221 serves as a coordination point for substrate. Ni(2+) contacts are provided by histidine 248 and histidine 274. Histidine 322 acts as the Proton donor in catalysis. Ni(2+) is bound at residue aspartate 362.

The protein belongs to the metallo-dependent hydrolases superfamily. Urease alpha subunit family. As to quaternary structure, heterotrimer of UreA (gamma), UreB (beta) and UreC (alpha) subunits. Three heterotrimers associate to form the active enzyme. It depends on Ni cation as a cofactor. Carboxylation allows a single lysine to coordinate two nickel ions.

It is found in the cytoplasm. The catalysed reaction is urea + 2 H2O + H(+) = hydrogencarbonate + 2 NH4(+). Its pathway is nitrogen metabolism; urea degradation; CO(2) and NH(3) from urea (urease route): step 1/1. This Synechococcus sp. (strain WH7805) protein is Urease subunit alpha.